A 428-amino-acid polypeptide reads, in one-letter code: Glial fibrillary acidic protein (428 aa).

The tract at residues methionine 1–glutamate 68 is head. A Phosphothreonine; by AURKB and ROCK1 modification is found at threonine 7. Arginine 12 is subject to Omega-N-methylarginine. Phosphoserine; by AURKB and ROCK1 is present on serine 13. A citrulline mark is found at arginine 26 and arginine 32. Phosphoserine; by AURKB and ROCK1 is present on serine 34. The 309-residue stretch at glutamate 65 to isoleucine 373 folds into the IF rod domain. Residues methionine 69–leucine 100 form a coil 1A region. Serine 78 bears the Phosphoserine mark. A linker 1 region spans residues arginine 101 to valine 111. 2 positions are modified to phosphothreonine: threonine 106 and threonine 146. Residues tyrosine 112–glutamine 210 form a coil 1B region. The linker 12 stretch occupies residues leucine 211 to aspartate 226. Residues leucine 227–glutamate 248 are coil 2A. The tract at residues alanine 249–tryptophan 252 is linker 2. Residues tyrosine 253 to isoleucine 373 are coil 2B. Arginine 266 carries the post-translational modification Citrulline. Phosphoserine is present on serine 319. The interval threonine 374–methionine 428 is tail. Phosphothreonine is present on threonine 379. Phosphoserine is present on serine 381. Residues arginine 402 and arginine 412 each carry the citrulline modification.

This sequence belongs to the intermediate filament family. Interacts with SYNM. Phosphorylated by PKN1.

The protein localises to the cytoplasm. Its function is as follows. GFAP, a class-III intermediate filament, is a cell-specific marker that, during the development of the central nervous system, distinguishes astrocytes from other glial cells. This is Glial fibrillary acidic protein (GFAP) from Bos taurus (Bovine).